Here is a 160-residue protein sequence, read N- to C-terminus: UPF0262 protein BCAN_A0255 (160 aa).

The protein belongs to the UPF0262 family.

This is UPF0262 protein BCAN_A0255 from Brucella canis (strain ATCC 23365 / NCTC 10854 / RM-666).